We begin with the raw amino-acid sequence, 494 residues long: Guanosine-5'-triphosphate,3'-diphosphate pyrophosphatase (494 aa).

Belongs to the GppA/Ppx family. GppA subfamily.

It catalyses the reaction guanosine 3'-diphosphate 5'-triphosphate + H2O = guanosine 3',5'-bis(diphosphate) + phosphate + H(+). Its pathway is purine metabolism; ppGpp biosynthesis; ppGpp from GTP: step 2/2. In terms of biological role, catalyzes the conversion of pppGpp to ppGpp. Guanosine pentaphosphate (pppGpp) is a cytoplasmic signaling molecule which together with ppGpp controls the 'stringent response', an adaptive process that allows bacteria to respond to amino acid starvation, resulting in the coordinated regulation of numerous cellular activities. The protein is Guanosine-5'-triphosphate,3'-diphosphate pyrophosphatase of Citrobacter koseri (strain ATCC BAA-895 / CDC 4225-83 / SGSC4696).